The following is a 416-amino-acid chain: E3 ubiquitin-protein ligase RNFT1 (416 aa).

Disordered regions lie at residues 1–50 and 68–117; these read MKHR…MSLP and DLSS…DSRE. Residues 7–19 show a composition bias toward basic and acidic residues; sequence HERQSSTESKNLK. Polar residues-rich tracts occupy residues 20-45 and 68-80; these read ETTQ…SPSA and DLSS…VARS. A compositionally biased stretch (basic residues) spans 81–100; it reads NSRRVRPSTHGRSPSRHGHT. 6 helical membrane-spanning segments follow: residues 146 to 166, 184 to 204, 214 to 234, 237 to 257, 265 to 287, and 302 to 322; these read LVVQ…TFLY, LQCL…YYTF, VFMN…VVGI, FIGK…PSFV, YWYM…PVWF, and WHFG…IIFG. A required for ubiquitin ligase activity and for protection against ER stress-induced cell death region spans residues 349–400; it reads CSEADGMCAICQAEFTKPIALICQHVFCEECISSWFNKEKTCPLCRTLISNH. The segment at 356–394 adopts an RING-type zinc-finger fold; sequence CAICQAEFTKPIALICQHVFCEECISSWFNKEKTCPLCR.

It is found in the endoplasmic reticulum membrane. It carries out the reaction S-ubiquitinyl-[E2 ubiquitin-conjugating enzyme]-L-cysteine + [acceptor protein]-L-lysine = [E2 ubiquitin-conjugating enzyme]-L-cysteine + N(6)-ubiquitinyl-[acceptor protein]-L-lysine.. It participates in protein modification; protein ubiquitination. In terms of biological role, E3 ubiquitin-protein ligase that acts in the endoplasmic reticulum (ER)-associated degradation (ERAD) pathway, which targets misfolded proteins that accumulate in the endoplasmic reticulum (ER) for ubiquitination and subsequent proteasome-mediated degradation. Protects cells from ER stress-induced apoptosis. The protein is E3 ubiquitin-protein ligase RNFT1 (rnft1) of Xenopus laevis (African clawed frog).